Here is a 104-residue protein sequence, read N- to C-terminus: UPF0145 protein TM1040_1243 (104 aa).

It belongs to the UPF0145 family.

The protein is UPF0145 protein TM1040_1243 of Ruegeria sp. (strain TM1040) (Silicibacter sp.).